Here is a 249-residue protein sequence, read N- to C-terminus: ATP synthase subunit a (249 aa).

Transmembrane regions (helical) follow at residues 29–49 (ASLF…FATS), 84–104 (FFPF…LGMF), 114–134 (IIVT…YGFY), 140–160 (FFGI…VASI), 193–213 (FVAS…LPLI), and 216–236 (VAMT…FAVL).

Belongs to the ATPase A chain family. In terms of assembly, F-type ATPases have 2 components, CF(1) - the catalytic core - and CF(0) - the membrane proton channel. CF(1) has five subunits: alpha(3), beta(3), gamma(1), delta(1), epsilon(1). CF(0) has three main subunits: a(1), b(2) and c(9-12). The alpha and beta chains form an alternating ring which encloses part of the gamma chain. CF(1) is attached to CF(0) by a central stalk formed by the gamma and epsilon chains, while a peripheral stalk is formed by the delta and b chains.

It localises to the cell inner membrane. Its function is as follows. Key component of the proton channel; it plays a direct role in the translocation of protons across the membrane. This is ATP synthase subunit a from Agrobacterium fabrum (strain C58 / ATCC 33970) (Agrobacterium tumefaciens (strain C58)).